The sequence spans 387 residues: Gamma-butyrobetaine dioxygenase (387 aa).

Zn(2+)-binding residues include C38, C40, C43, and H82. Fe cation is bound by residues H202, D204, and H347. S351 bears the Phosphoserine mark.

Belongs to the gamma-BBH/TMLD family. Fe(2+) is required as a cofactor. It depends on L-ascorbate as a cofactor. Highly expressed in kidney; moderately expressed in liver; very low expression in brain.

The protein resides in the cytoplasm. It catalyses the reaction 4-(trimethylamino)butanoate + 2-oxoglutarate + O2 = carnitine + succinate + CO2. Its pathway is amine and polyamine biosynthesis; carnitine biosynthesis. Catalyzes the formation of L-carnitine from gamma-butyrobetaine. This chain is Gamma-butyrobetaine dioxygenase (BBOX1), found in Homo sapiens (Human).